The chain runs to 291 residues: Lipoyl synthase 1 (291 aa).

The [4Fe-4S] cluster site is built by Cys34, Cys39, Cys45, Cys60, Cys64, Cys67, and Ser274. One can recognise a Radical SAM core domain in the interval 46–263; that stretch reads FQAGTATFLI…QVYGEELGFL (218 aa).

This sequence belongs to the radical SAM superfamily. Lipoyl synthase family. It depends on [4Fe-4S] cluster as a cofactor.

It localises to the cytoplasm. The catalysed reaction is [[Fe-S] cluster scaffold protein carrying a second [4Fe-4S](2+) cluster] + N(6)-octanoyl-L-lysyl-[protein] + 2 oxidized [2Fe-2S]-[ferredoxin] + 2 S-adenosyl-L-methionine + 4 H(+) = [[Fe-S] cluster scaffold protein] + N(6)-[(R)-dihydrolipoyl]-L-lysyl-[protein] + 4 Fe(3+) + 2 hydrogen sulfide + 2 5'-deoxyadenosine + 2 L-methionine + 2 reduced [2Fe-2S]-[ferredoxin]. Its pathway is protein modification; protein lipoylation via endogenous pathway; protein N(6)-(lipoyl)lysine from octanoyl-[acyl-carrier-protein]: step 2/2. Catalyzes the radical-mediated insertion of two sulfur atoms into the C-6 and C-8 positions of the octanoyl moiety bound to the lipoyl domains of lipoate-dependent enzymes, thereby converting the octanoylated domains into lipoylated derivatives. The chain is Lipoyl synthase 1 from Nostoc sp. (strain PCC 7120 / SAG 25.82 / UTEX 2576).